Consider the following 317-residue polypeptide: L-lactate dehydrogenase (317 aa).

Residues V17, D38, K43, Y69, and 83–84 (GA) each bind NAD(+). The substrate site is built by Q86 and R92. NAD(+) is bound by residues S105, 122–124 (ATN), and S147. Residue 124–127 (NPVD) participates in substrate binding. 152-155 (DTAR) lines the substrate pocket. 2 residues coordinate beta-D-fructose 1,6-bisphosphate: R157 and H172. H179 acts as the Proton acceptor in catalysis. At Y224 the chain carries Phosphotyrosine. A substrate-binding site is contributed by T233.

It belongs to the LDH/MDH superfamily. LDH family. Homotetramer.

The protein localises to the cytoplasm. The catalysed reaction is (S)-lactate + NAD(+) = pyruvate + NADH + H(+). Its pathway is fermentation; pyruvate fermentation to lactate; (S)-lactate from pyruvate: step 1/1. Allosterically activated by fructose 1,6-bisphosphate (FBP). Catalyzes the conversion of lactate to pyruvate. In Geobacillus kaustophilus (strain HTA426), this protein is L-lactate dehydrogenase.